A 457-amino-acid polypeptide reads, in one-letter code: Argininosuccinate lyase (457 aa).

Belongs to the lyase 1 family. Argininosuccinate lyase subfamily.

Its subcellular location is the cytoplasm. It carries out the reaction 2-(N(omega)-L-arginino)succinate = fumarate + L-arginine. It functions in the pathway amino-acid biosynthesis; L-arginine biosynthesis; L-arginine from L-ornithine and carbamoyl phosphate: step 3/3. This Pectobacterium atrosepticum (strain SCRI 1043 / ATCC BAA-672) (Erwinia carotovora subsp. atroseptica) protein is Argininosuccinate lyase.